The following is a 271-amino-acid chain: Putative phosphoenolpyruvate synthase regulatory protein (271 aa).

Gly-152 to Thr-159 contacts ADP.

Belongs to the pyruvate, phosphate/water dikinase regulatory protein family. PSRP subfamily.

It catalyses the reaction [pyruvate, water dikinase] + ADP = [pyruvate, water dikinase]-phosphate + AMP + H(+). The enzyme catalyses [pyruvate, water dikinase]-phosphate + phosphate + H(+) = [pyruvate, water dikinase] + diphosphate. Functionally, bifunctional serine/threonine kinase and phosphorylase involved in the regulation of the phosphoenolpyruvate synthase (PEPS) by catalyzing its phosphorylation/dephosphorylation. This chain is Putative phosphoenolpyruvate synthase regulatory protein, found in Legionella pneumophila (strain Corby).